Consider the following 142-residue polypeptide: Large ribosomal subunit protein uL11 (142 aa).

This sequence belongs to the universal ribosomal protein uL11 family. Part of the ribosomal stalk of the 50S ribosomal subunit. Interacts with L10 and the large rRNA to form the base of the stalk. L10 forms an elongated spine to which L12 dimers bind in a sequential fashion forming a multimeric L10(L12)X complex. In terms of processing, one or more lysine residues are methylated.

Functionally, forms part of the ribosomal stalk which helps the ribosome interact with GTP-bound translation factors. The sequence is that of Large ribosomal subunit protein uL11 from Sinorhizobium medicae (strain WSM419) (Ensifer medicae).